Here is a 194-residue protein sequence, read N- to C-terminus: Inosine triphosphate pyrophosphatase (194 aa).

8 to 13 (TGNANK) is a binding site for ITP. Residue Glu-47 coordinates Mg(2+). ITP-binding positions include Lys-59, 75 to 76 (DT), Lys-92, 151 to 154 (FGWD), Lys-174, and 179 to 180 (HR).

It belongs to the HAM1 NTPase family. As to quaternary structure, homodimer. It depends on Mg(2+) as a cofactor. Mn(2+) is required as a cofactor.

The protein localises to the cytoplasm. The protein resides in the nucleus. The enzyme catalyses ITP + H2O = IMP + diphosphate + H(+). It carries out the reaction dITP + H2O = dIMP + diphosphate + H(+). The catalysed reaction is XTP + H2O = XMP + diphosphate + H(+). In terms of biological role, pyrophosphatase that hydrolyzes non-canonical purine nucleotides such as inosine triphosphate (ITP), deoxyinosine triphosphate (dITP) or xanthosine 5'-triphosphate (XTP) to their respective monophosphate derivatives. The enzyme does not distinguish between the deoxy- and ribose forms. Probably excludes non-canonical purines from RNA and DNA precursor pools, thus preventing their incorporation into RNA and DNA and avoiding chromosomal lesions. The sequence is that of Inosine triphosphate pyrophosphatase from Scheffersomyces stipitis (strain ATCC 58785 / CBS 6054 / NBRC 10063 / NRRL Y-11545) (Yeast).